An 83-amino-acid polypeptide reads, in one-letter code: Apolipoprotein C-I (83 aa).

Positions 1-26 (MRLFLSLPVLVVVLSIVLEGPAPAQG) are cleaved as a signal peptide.

Belongs to the apolipoprotein C1 family. In terms of tissue distribution, synthesized mainly in liver and to a minor degree in intestine. Also found in the lung and spleen.

It localises to the secreted. Functionally, inhibitor of lipoprotein binding to the low density lipoprotein (LDL) receptor, LDL receptor-related protein, and very low density lipoprotein (VLDL) receptor. Associates with high density lipoproteins (HDL) and the triacylglycerol-rich lipoproteins in the plasma and makes up about 10% of the protein of the VLDL and 2% of that of HDL. Appears to interfere directly with fatty acid uptake and is also the major plasma inhibitor of cholesteryl ester transfer protein (CETP). Binds free fatty acids and reduces their intracellular esterification. Modulates the interaction of APOE with beta-migrating VLDL and inhibits binding of beta-VLDL to the LDL receptor-related protein. This chain is Apolipoprotein C-I (APOC1), found in Homo sapiens (Human).